Consider the following 30-residue polypeptide: Cyclotide mela-5 (30 aa).

A cross-link (cyclopeptide (Gly-Asp)) is located at residues 1–30 (GSAIACGESCFKFKCYTPGCSCSYPICKKD). Intrachain disulfides connect Cys6–Cys20, Cys10–Cys22, and Cys15–Cys27.

In terms of processing, this is a cyclic peptide. Contains 3 disulfide bonds.

Its function is as follows. Probably participates in a plant defense mechanism (Potential). Binds to and induces leakage in phospholipd membranes, particularly ones containing 1-palmitoyl-2-oleophosphatidylethanolamine (POPE). The sequence is that of Cyclotide mela-5 from Melicytus latifolius (Norfolk Island mahoe).